The chain runs to 442 residues: UDP-glycosyltransferase 78D4 (442 aa).

Residues 322 to 324 (APQ), 339 to 347 (HGGWNSVLE), and 361 to 364 (FGDH) contribute to the UDP-alpha-D-glucose site.

The protein belongs to the UDP-glycosyltransferase family.

The polypeptide is UDP-glycosyltransferase 78D4 (UGT78D4) (Arabidopsis thaliana (Mouse-ear cress)).